We begin with the raw amino-acid sequence, 235 residues long: Phosphoribosylaminoimidazole-succinocarboxamide synthase (235 aa).

This sequence belongs to the SAICAR synthetase family.

The catalysed reaction is 5-amino-1-(5-phospho-D-ribosyl)imidazole-4-carboxylate + L-aspartate + ATP = (2S)-2-[5-amino-1-(5-phospho-beta-D-ribosyl)imidazole-4-carboxamido]succinate + ADP + phosphate + 2 H(+). Its pathway is purine metabolism; IMP biosynthesis via de novo pathway; 5-amino-1-(5-phospho-D-ribosyl)imidazole-4-carboxamide from 5-amino-1-(5-phospho-D-ribosyl)imidazole-4-carboxylate: step 1/2. This chain is Phosphoribosylaminoimidazole-succinocarboxamide synthase, found in Chlorobaculum parvum (strain DSM 263 / NCIMB 8327) (Chlorobium vibrioforme subsp. thiosulfatophilum).